We begin with the raw amino-acid sequence, 258 residues long: Imidazole glycerol phosphate synthase subunit HisF (258 aa).

Residues Asp-11 and Asp-130 contribute to the active site.

It belongs to the HisA/HisF family. In terms of assembly, heterodimer of HisH and HisF.

It localises to the cytoplasm. It carries out the reaction 5-[(5-phospho-1-deoxy-D-ribulos-1-ylimino)methylamino]-1-(5-phospho-beta-D-ribosyl)imidazole-4-carboxamide + L-glutamine = D-erythro-1-(imidazol-4-yl)glycerol 3-phosphate + 5-amino-1-(5-phospho-beta-D-ribosyl)imidazole-4-carboxamide + L-glutamate + H(+). Its pathway is amino-acid biosynthesis; L-histidine biosynthesis; L-histidine from 5-phospho-alpha-D-ribose 1-diphosphate: step 5/9. IGPS catalyzes the conversion of PRFAR and glutamine to IGP, AICAR and glutamate. The HisF subunit catalyzes the cyclization activity that produces IGP and AICAR from PRFAR using the ammonia provided by the HisH subunit. The polypeptide is Imidazole glycerol phosphate synthase subunit HisF (Nitrobacter hamburgensis (strain DSM 10229 / NCIMB 13809 / X14)).